Consider the following 166-residue polypeptide: KH homology domain-containing protein 1A (166 aa).

The KH; atypical domain occupies 19–78 (PLVFDMEEDKEDYIFGPHDEYLHTLEVHSNTLIQLERWFTPTGQTRVTVVGPLKARLWVM).

This sequence belongs to the KHDC1 family.

The protein resides in the cytoplasm. Has pro-apoptotic activity. The protein is KH homology domain-containing protein 1A (Khdc1a) of Mus musculus (Mouse).